A 447-amino-acid chain; its full sequence is UDP-glycosyltransferase 79B9 (447 aa).

UDP-alpha-D-glucose-binding positions include S260, 319–321 (VQQ), 336–344 (HCGFGSMWE), and 358–361 (LCDQ).

Belongs to the UDP-glycosyltransferase family.

The sequence is that of UDP-glycosyltransferase 79B9 (UGT79B9) from Arabidopsis thaliana (Mouse-ear cress).